The following is a 33-amino-acid chain: MDKKEYINRLNEQKPLQEMXSRDRYLXNFHLIP.

15 to 18 (PLQE) is a substrate binding site. Glutamate 18 is an active-site residue.

Belongs to the glycosyl hydrolase 32 family.

The catalysed reaction is Hydrolysis of terminal non-reducing beta-D-fructofuranoside residues in beta-D-fructofuranosides.. It functions in the pathway glycan biosynthesis; sucrose metabolism. This chain is Sucrose-6-phosphate hydrolase, found in Fusobacterium mortiferum.